A 238-amino-acid chain; its full sequence is MRPSGRAPDQMRAISIETGFTVHAEGSVLISFGDTRVLVTASVEEKVPPFLRGKGQGWVTAEYGMLPRATHTRGSREAAKGKQSGRTQEIQRLIGRSLRAVVDMAKLGERQIVIDCDVLQADGGTRTASISGGWVALRLAVDKLLASGAIAEDPITAQVAAISCGIHEGTPVLDLDYIEDSNAHADANFVLLDNGNIAEAQATAEGATYDEEALLRLLRLARIGCGEIFAAQRKATGR.

Phosphate is bound by residues R86 and G124–R126.

This sequence belongs to the RNase PH family. In terms of assembly, homohexameric ring arranged as a trimer of dimers.

The enzyme catalyses tRNA(n+1) + phosphate = tRNA(n) + a ribonucleoside 5'-diphosphate. Phosphorolytic 3'-5' exoribonuclease that plays an important role in tRNA 3'-end maturation. Removes nucleotide residues following the 3'-CCA terminus of tRNAs; can also add nucleotides to the ends of RNA molecules by using nucleoside diphosphates as substrates, but this may not be physiologically important. Probably plays a role in initiation of 16S rRNA degradation (leading to ribosome degradation) during starvation. The chain is Ribonuclease PH from Rhizorhabdus wittichii (strain DSM 6014 / CCUG 31198 / JCM 15750 / NBRC 105917 / EY 4224 / RW1) (Sphingomonas wittichii).